Here is a 349-residue protein sequence, read N- to C-terminus: Cbb3-type cytochrome c oxidase subunit CcoP (349 aa).

The disordered stretch occupies residues 1–67 (MADTDDEHAS…RVVRDRKGGR (67 aa)). Residues 1 to 96 (MADTDDEHAS…NPLPRWWLWT (96 aa)) are Cytoplasmic-facing. The span at 16–30 (NRIELERQAADEAHK) shows a compositional bias: basic and acidic residues. A helical membrane pass occupies residues 97–117 (FYATIVWGVLYLIAYPAIPLV). Residues 118–349 (NGATQGLLGQ…AYVHSLGGGE (232 aa)) are Periplasmic-facing. 2 consecutive Cytochrome c domains span residues 168–258 (YTAN…LELG) and 265–346 (ALAA…HSLG). Heme c contacts are provided by Cys-181, Cys-184, His-185, Met-233, Cys-278, Cys-281, His-282, and Met-323.

Belongs to the CcoP / FixP family. Component of the cbb3-type cytochrome c oxidase at least composed of CcoN, CcoO, CcoQ and CcoP. Heme c serves as cofactor.

The protein resides in the cell inner membrane. It participates in energy metabolism; oxidative phosphorylation. Its function is as follows. C-type cytochrome. Part of the cbb3-type cytochrome c oxidase complex. CcoP subunit is required for transferring electrons from donor cytochrome c via its heme groups to CcoO subunit. From there, electrons are shuttled to the catalytic binuclear center of CcoN subunit where oxygen reduction takes place. The complex also functions as a proton pump. The protein is Cbb3-type cytochrome c oxidase subunit CcoP of Paracoccus denitrificans (strain Pd 1222).